The following is a 296-amino-acid chain: Class E basic helix-loop-helix protein 22 (296 aa).

The tract at residues 26–70 is disordered; sequence SAFRPPQGLDLSQPGDRSPLHCYDGPDPSDLLRHHQHHHQASSGA. One can recognise a bHLH domain in the interval 153–207; the sequence is TLRLNINARERRRMHDLNDALDELRAVIPYAHSPSVRKLSKIATLLLAKNYILMQ.

Its subcellular location is the nucleus. Functionally, may act as a transcriptional repressor. The protein is Class E basic helix-loop-helix protein 22 (bhlhe22) of Xenopus tropicalis (Western clawed frog).